Here is an 88-residue protein sequence, read N- to C-terminus: Small ribosomal subunit protein bS20 (88 aa).

Residues 1-17 (MANIKSNEKRLRQDIKR) show a composition bias toward basic and acidic residues. Positions 1–25 (MANIKSNEKRLRQDIKRNLNNKGQK) are disordered.

Belongs to the bacterial ribosomal protein bS20 family.

Functionally, binds directly to 16S ribosomal RNA. The sequence is that of Small ribosomal subunit protein bS20 from Mycoplasma genitalium (strain ATCC 33530 / DSM 19775 / NCTC 10195 / G37) (Mycoplasmoides genitalium).